We begin with the raw amino-acid sequence, 454 residues long: Nucleoprotein (454 aa).

The disordered stretch occupies residues M1–V62. A compositionally biased stretch (low complexity) spans G11–G21. A compositionally biased stretch (polar residues) spans P49–S61. Residues Q56–S197 form an RNA-binding region. In terms of domain architecture, CoV N NTD spans P64–G193. The RNA site is built by R109, R125, and R167. Disordered regions lie at residues K159–K230, A249–P292, and D382–T428. The residue at position 170 (S170) is a Phosphoserine; by host. T177 is modified (phosphothreonine; by host). Residues G193 to P212 show a composition bias toward low complexity. S194 carries the phosphoserine; by host modification. A compositionally biased stretch (polar residues) spans R215–S227. Positions A260–G383 constitute a CoV N CTD domain. Over residues I267–P277 the composition is skewed to basic residues. The interval I267–G383 is dimerization. 2 positions are modified to phosphoserine; by host: S389 and S424. T428 carries the post-translational modification Phosphothreonine; by host.

Belongs to the betacoronavirus nucleocapsid protein family. In terms of assembly, homooligomer. Both monomeric and oligomeric forms interact with RNA. Interacts with protein M. Interacts with NSP3; this interaction serves to tether the genome to the newly translated replicase-transcriptase complex at a very early stage of infection. Post-translationally, ADP-ribosylated. The ADP-ribosylation is retained in the virion during infection. Phosphorylated on serine and threonine residues.

The protein resides in the virion. Its subcellular location is the host endoplasmic reticulum-Golgi intermediate compartment. It is found in the host Golgi apparatus. Packages the positive strand viral genome RNA into a helical ribonucleocapsid (RNP) and plays a fundamental role during virion assembly through its interactions with the viral genome and membrane protein M. Plays an important role in enhancing the efficiency of subgenomic viral RNA transcription as well as viral replication. This Murine coronavirus (strain S) (MHV-S) protein is Nucleoprotein.